A 76-amino-acid polypeptide reads, in one-letter code: Senegalin (76 aa).

Positions methionine 1–alanine 22 are cleaved as a signal peptide. A propeptide spanning residues asparagine 23–aspartate 55 is cleaved from the precursor. The tract at residues lysine 24–glutamate 54 is disordered. The residue at position 75 (leucine 75) is a Leucine amide.

In terms of tissue distribution, expressed by the skin glands.

It localises to the secreted. Functionally, antimicrobial peptide with activity against the Gram-positive bacterium S.aureus NCTC 10788 (MIC=50 um) and the yeast C.albicans NCPF 1467 (MIC=150 uM). Ineffective against the Gram-negative bacterium E.coli NCTC 10418. Induces a dose-dependent contraction of rat urinary bladder smooth muscle (EC50=2.9 nM) and a dose-dependent relaxation of rat tail artery smooth muscle (EC50=37.7 nM). The protein is Senegalin of Kassina senegalensis (Senegal running frog).